A 570-amino-acid polypeptide reads, in one-letter code: Glutamate--tRNA ligase, chloroplastic/mitochondrial (570 aa).

Residues 1 to 39 (MASLVYGTPWLRVRSLPELAPAFLRRRQSSLFYCSRRSF) constitute a chloroplast and mitochondrion transit peptide. Residue 57 to 59 (RFA) coordinates L-glutamate. Residues 60–70 (PSPTGNLHVGG) carry the 'HIGH' region motif. His67 contributes to the ATP binding site. L-glutamate-binding positions include Glu93, 245 to 249 (YNFCV), and Arg263. ATP is bound by residues Glu266 and 301–305 (KLSKR). A 'KMSKS' region motif is present at residues 301–305 (KLSKR).

This sequence belongs to the class-I aminoacyl-tRNA synthetase family. Glutamate--tRNA ligase type 1 subfamily.

The protein localises to the plastid. It localises to the chloroplast. It is found in the mitochondrion. It catalyses the reaction tRNA(Glu) + L-glutamate + ATP = L-glutamyl-tRNA(Glu) + AMP + diphosphate. Functionally, catalyzes the attachment of glutamate to tRNA(Glu) in a two-step reaction: glutamate is first activated by ATP to form Glu-AMP and then transferred to the acceptor end of tRNA(Glu). This chain is Glutamate--tRNA ligase, chloroplastic/mitochondrial, found in Arabidopsis thaliana (Mouse-ear cress).